Here is a 346-residue protein sequence, read N- to C-terminus: MAKRKLTQNQTRRIQSNNAKTLHRHKKKDIEWSDEMLGESQEGVVVTRYSIHADVENEQGEIYRCNLRRTLSSLVVGDKVVWRKGNEQLQGVSGVIEAIHPRENEISRPDYYDGLKPIAANIDRIIIVSAVLPTLSLNIIDRYLVVCEIAGITPLIVLNKVDLLAQEQRQEIEDQLKIYQDIGYEILMISAKSGENMEKLTALLAQGTAIFVGQSGVGKSSLINHILPSVNAQVGDVSETSGLGQHTTTSSRLYHLPQGGNLIDSPGIREFGLWHLDAEQITKGYREFQYVLGTCKFRDCKHLSDPGCALREAVEQGKISPVRYDNYHRLIESLSETKSQRHFSLV.

Positions 1-26 (MAKRKLTQNQTRRIQSNNAKTLHRHK) are disordered. Over residues 7 to 20 (TQNQTRRIQSNNAK) the composition is skewed to polar residues. In terms of domain architecture, CP-type G spans 103–271 (ENEISRPDYY…LIDSPGIREF (169 aa)). Residues 159-162 (NKVD) and 213-221 (GQSGVGKSS) each bind GTP. Zn(2+) contacts are provided by cysteine 295, cysteine 300, histidine 302, and cysteine 308.

This sequence belongs to the TRAFAC class YlqF/YawG GTPase family. RsgA subfamily. Monomer. Associates with 30S ribosomal subunit, binds 16S rRNA. Zn(2+) serves as cofactor.

Its subcellular location is the cytoplasm. In terms of biological role, one of several proteins that assist in the late maturation steps of the functional core of the 30S ribosomal subunit. Helps release RbfA from mature subunits. May play a role in the assembly of ribosomal proteins into the subunit. Circularly permuted GTPase that catalyzes slow GTP hydrolysis, GTPase activity is stimulated by the 30S ribosomal subunit. The polypeptide is Small ribosomal subunit biogenesis GTPase RsgA (Haemophilus influenzae (strain PittEE)).